A 1182-amino-acid chain; its full sequence is Rho guanine nucleotide exchange factor osg-1 (1182 aa).

The span at 1-12 (MLNPNDADDSDS) shows a compositional bias: acidic residues. The segment at 1–96 (MLNPNDADDS…TNSEPNVDMP (96 aa)) is disordered. Residues 29-41 (ATVSPSTRNSFYN) show a composition bias toward polar residues. Basic and acidic residues predominate over residues 69–78 (ASRERSESRR). A DH domain is found at 357-544 (VRHLAARELL…HCLAVAINQH (188 aa)). The stretch at 637-669 (EDVQISKDTLSQLEEVERKLESSREDDRVLKKM) forms a coiled coil. Residues 863 to 884 (INSSGSDTESSSDEGTSTAGQT) are disordered. Residues 865 to 879 (SSGSDTESSSDEGTS) show a composition bias toward low complexity. A coiled-coil region spans residues 897-922 (VVNSTERVRSRARDRLARLRNSITSI).

In terms of tissue distribution, expressed in muscles in the body wall and head, and in the nervous system in neurons including FLP and ASE neurons in the head.

Functionally, probable guanine nucleotide exchange factor which regulates the Rho GTPase rho-1. Functions in ASE sensory neurons where it promotes neuronal degeneration under conditions of oxidative stress. The sequence is that of Rho guanine nucleotide exchange factor osg-1 from Caenorhabditis elegans.